A 574-amino-acid polypeptide reads, in one-letter code: Sulfate adenylyltransferase (574 aa).

The N-terminal stretch occupies residues 1 to 169 (MANTPHGGVL…IEAVNKLNHY (169 aa)). Residues 170–394 (DYVALRYTPA…LRESNPPRAS (225 aa)) form a catalytic region. Gln-197 serves as a coordination point for sulfate. ATP contacts are provided by residues 197 to 200 (QTRN) and 291 to 294 (GRDH). Active-site residues include Thr-198, Arg-199, and Asn-200. Residue Arg-199 coordinates sulfate. Ala-295 provides a ligand contact to sulfate. ATP is bound at residue Val-333. The allosteric regulation domain; adenylyl-sulfate kinase-like stretch occupies residues 395–574 (QGFTIFLTGY…LESEGYFERL (180 aa)). 3'-phosphoadenylyl sulfate-binding positions include 434-437 (DTVR), Arg-451, 477-478 (IA), and Arg-516.

It in the N-terminal section; belongs to the sulfate adenylyltransferase family. The protein in the C-terminal section; belongs to the APS kinase family. Homohexamer. Dimer of trimers.

The protein resides in the cytoplasm. It carries out the reaction sulfate + ATP + H(+) = adenosine 5'-phosphosulfate + diphosphate. The protein operates within sulfur metabolism; hydrogen sulfide biosynthesis; sulfite from sulfate: step 1/3. With respect to regulation, allosterically inhibited by 3'-phosphoadenosine 5'-phosphosulfate (PAPS). Catalyzes the first intracellular reaction of sulfate assimilation, forming adenosine-5'-phosphosulfate (APS) from inorganic sulfate and ATP. Plays an important role in sulfate activation as a component of the biosynthesis pathway of sulfur-containing amino acids. This is Sulfate adenylyltransferase from Aspergillus niger.